The sequence spans 607 residues: Major facilitator superfamily multidrug transporter mdrA (607 aa).

The next 12 membrane-spanning stretches (helical) occupy residues 77-97 (MTVA…TGGV), 110-130 (VATL…LLWA), 139-159 (QIIF…SAGA), 170-190 (FFAG…IADM), 202-222 (LFAA…GFLG), 229-249 (WVMG…TIFV), 305-325 (PIVF…YMLF), 342-362 (VSSL…TYSV), 385-405 (LPPT…FAWT), 413-433 (IVCI…FLGI), 443-463 (IFAA…GAVF), and 478-498 (WASS…FLFY). The tract at residues 523-583 (EQMKQAPEPE…ASTRTASSLR (61 aa)) is disordered. Residues 553-564 (DVSETESNVEEL) are compositionally biased toward acidic residues. Residues 572 to 583 (SRASTRTASSLR) show a composition bias toward low complexity.

This sequence belongs to the major facilitator superfamily. DHA1 family. Polyamines/proton antiporter (TC 2.A.1.2.16) subfamily.

It is found in the cell membrane. MFS transporter involved in the basal level of azole susceptibility. Confers resistance to voriconazole and, to a lesser extent, to fluconazole. In Aspergillus fumigatus (strain ATCC MYA-4609 / CBS 101355 / FGSC A1100 / Af293) (Neosartorya fumigata), this protein is Major facilitator superfamily multidrug transporter mdrA.